The following is a 110-amino-acid chain: Large ribosomal subunit protein uL22 (110 aa).

It belongs to the universal ribosomal protein uL22 family. Part of the 50S ribosomal subunit.

Its function is as follows. This protein binds specifically to 23S rRNA; its binding is stimulated by other ribosomal proteins, e.g. L4, L17, and L20. It is important during the early stages of 50S assembly. It makes multiple contacts with different domains of the 23S rRNA in the assembled 50S subunit and ribosome. In terms of biological role, the globular domain of the protein is located near the polypeptide exit tunnel on the outside of the subunit, while an extended beta-hairpin is found that lines the wall of the exit tunnel in the center of the 70S ribosome. The chain is Large ribosomal subunit protein uL22 from Mycoplasma mobile (strain ATCC 43663 / 163K / NCTC 11711) (Mesomycoplasma mobile).